The following is a 782-amino-acid chain: Ribosome biogenesis protein ERB1 (782 aa).

Basic residues predominate over residues 1–11 (MSVNSRKRKVA). The segment at 1 to 120 (MSVNSRKRKV…LEGEEDESLK (120 aa)) is disordered. Acidic residues-rich tracts occupy residues 39–51 (DESEDDQDAEDTD) and 59–75 (LSDEDFEDEEDSGDEAE). The segment covering 82-92 (RNLNTSGGSQQ) has biased composition (polar residues). Residues 106–117 (GADGELEGEEDE) are compositionally biased toward acidic residues. 2 WD repeats span residues 432–471 (GQEGRVRCVSVDPQGIFVASGGDDGYVRIWELLTGRQVWN) and 475–516 (SDEE…PDVE). The interval 533–556 (KPSTAANGEAPKQSPGKWSRPGSR) is disordered. WD repeat units lie at residues 612 to 652 (RLKG…KILQ), 653 to 692 (PGAKWISSIDVHPGGDNIIVGTYDKRLLWHDLDLSNKPYK), 696 to 736 (FHKE…DLME), and 752 to 782 (KSRLGVMDLDWHPREPWCVSAGADGTLRLWN).

Belongs to the WD repeat BOP1/ERB1 family. Component of the NOP7 complex, composed of ERB1, NOP7 and YTM1. The complex is held together by ERB1, which interacts with NOP7 via its N-terminal domain and with YTM1 via a high-affinity interaction between the seven-bladed beta-propeller domains of the 2 proteins. The NOP7 complex associates with the 66S pre-ribosome.

It localises to the nucleus. Its subcellular location is the nucleolus. The protein localises to the nucleoplasm. Its function is as follows. Component of the NOP7 complex, which is required for maturation of the 25S and 5.8S ribosomal RNAs and formation of the 60S ribosome. The chain is Ribosome biogenesis protein ERB1 from Phaeosphaeria nodorum (strain SN15 / ATCC MYA-4574 / FGSC 10173) (Glume blotch fungus).